A 411-amino-acid chain; its full sequence is Protrudin (411 aa).

The disordered stretch occupies residues 1–27 (MQTSEREGSGPELSPSVMPEAPLESPP). Residues 1–66 (MQTSEREGSG…AGDGVRYLLR (66 aa)) are Cytoplasmic-facing. Residues 1–92 (MQTSEREGSG…LFLTLNEGAW (92 aa)) form a sufficient for homooligomerization region. The interval 1 to 205 (MQTSEREGSG…LYLLPLCWVL (205 aa)) is sufficient for localization to endoplasmic reticulum tubular network and for interactions with REEP1, REEP5, ATL1, ATL2, ATL3 and SPAST. The segment at 51-64 (LEPLKDAGDGVRYL) is necessary for interaction with RAB11A and function in neurite outgrowth. A helical transmembrane segment spans residues 67–87 (WQMPLCSLLTCLGLNVLFLTL). Position 88 (N88) is a topological domain, lumenal. A helical membrane pass occupies residues 89 to 109 (EGAWYSVGALMISVPALLGYL). Over 110 to 187 (QEVCRARLPE…NPVVSSQFYG (78 aa)) the chain is Cytoplasmic. Residues 188–208 (ALLGTICMLYLLPLCWVLTLL) constitute an intramembrane region (helical). At 209–411 (NSTLFLGNVE…CASCNQTLSK (203 aa)) the chain is on the cytoplasmic side. Residues 234-286 (MNPKQEEHAFESPPPPDVGGKGGLMDSTPALTPTEDLTPGSVEEAEEAEPDEE) form a disordered region. A necessary for interaction with KIF5A region spans residues 271–361 (TPGSVEEAEE…GCSATFSVLK (91 aa)). The span at 276 to 286 (EEAEEAEPDEE) shows a compositional bias: acidic residues. A necessary for interaction with VAPA region spans residues 286–292 (EFKDAIE). The segment at 344-410 (TNNFGNCTGC…VCASCNQTLS (67 aa)) adopts an FYVE-type zinc-finger fold. The Zn(2+) site is built by C350, C353, C366, C369, C374, C377, C402, and C405.

Can form homooligomers (monomers, dimers and tetramers). Interacts with RAB11A (GDP-bound form); regulates RAB11A. Interacts with FKBP8; may negatively regulate ZFYVE27 phosphorylation. Interacts with VAPA (via MSP domain); may regulate ZFYVE27 retention in the endoplasmic reticulum and its function in cell projections formation. Interacts with VAPB (via MSP domain). Interacts with RAB11B (GDP-bound form), REEP1, REEP5, ATL1, ATL2, ATL3, SPAST, SURF4, KIF5A, KIF5B, KIF5C and RTN3. Phosphorylated. Phosphorylation is induced by NGF through the MAPK/ERK pathway and modulates interaction with RAB11A.

It is found in the recycling endosome membrane. The protein resides in the endoplasmic reticulum membrane. The protein localises to the cell projection. Its subcellular location is the growth cone membrane. Its function is as follows. Key regulator of RAB11-dependent vesicular trafficking during neurite extension through polarized membrane transport. Promotes axonal elongation and contributes to the establishment of neuronal cell polarity. Involved in nerve growth factor-induced neurite formation in VAPA-dependent manner. Contributes to both the formation and stabilization of the tubular ER network. Involved in ER morphogenesis by regulating the sheet-to-tubule balance and possibly the density of tubule interconnections. Acts as an adapter protein that facilitates the interaction of KIF5A with VAPA, VAPB, SURF4, RAB11A, RAB11B and RTN3 and the ZFYVE27-KIF5A complex contributes to the transport of these proteins in neurons. Can induce formation of neurite-like membrane protrusions in non-neuronal cells in a KIF5A/B-dependent manner. The sequence is that of Protrudin (ZFYVE27) from Pongo abelii (Sumatran orangutan).